Here is a 645-residue protein sequence, read N- to C-terminus: Glucans biosynthesis glucosyltransferase H (645 aa).

Over residues 1 to 13 (MDGTVTPSPTTTA) the composition is skewed to polar residues. Positions 1 to 32 (MDGTVTPSPTTTAMPPVSALDAGTPTLPPEAP) are disordered. Transmembrane regions (helical) follow at residues 64-84 (LIGG…SVLW), 98-118 (LFVL…AGFV), 423-443 (APMW…GGGI), 465-485 (AIWI…LGYI), 504-524 (AVSI…VMYL), 559-579 (YGGL…VSPA), and 580-600 (LAAW…VVAL).

The protein belongs to the glycosyltransferase 2 family. OpgH subfamily.

The protein resides in the cell inner membrane. The protein operates within glycan metabolism; osmoregulated periplasmic glucan (OPG) biosynthesis. Involved in the biosynthesis of osmoregulated periplasmic glucans (OPGs). This chain is Glucans biosynthesis glucosyltransferase H, found in Xanthomonas euvesicatoria pv. vesicatoria (strain 85-10) (Xanthomonas campestris pv. vesicatoria).